The chain runs to 326 residues: tRNA-modifying protein YgfZ (326 aa).

The folate site is built by W27 and W189.

The protein belongs to the tRNA-modifying YgfZ family.

Its subcellular location is the cytoplasm. In terms of biological role, folate-binding protein involved in regulating the level of ATP-DnaA and in the modification of some tRNAs. It is probably a key factor in regulatory networks that act via tRNA modification, such as initiation of chromosomal replication. In Escherichia coli O6:K15:H31 (strain 536 / UPEC), this protein is tRNA-modifying protein YgfZ.